The chain runs to 178 residues: MTMFKKISVLFFTLILAGCSSWSSVTNYIPFMGNDKKVIDLDKDKIDQKSYAAAYEATVATYKGRVNENFFVDNFASGANDWYLGRILVPVKQIQDKLYTGGHDSDVYAYYSGVLHAEALQANLKRLSANCWEKVDSQSMAQGIYDAMRDLQKGEARGENDEYIVQGSEALLKACTSK.

The N-terminal stretch at 1 to 23 is a signal peptide; sequence MTMFKKISVLFFTLILAGCSSWS.

This is an uncharacterized protein from Haemophilus influenzae (strain ATCC 51907 / DSM 11121 / KW20 / Rd).